Consider the following 798-residue polypeptide: Serine/threonine-protein kinase haspin (798 aa).

The interval 1–110 is disordered; it reads MAASLPGPGS…WKLRARPSLT (110 aa). Residue Ser58 is modified to Phosphoserine. Residues 59–70 are compositionally biased toward acidic residues; sequence QSDDPDDPDDPD. The residue at position 93 (Ser93) is a Phosphoserine; by AURKB. Thr97 carries the phosphothreonine modification. At Ser143 the chain carries Phosphoserine; by AURKB. Phosphoserine is present on Ser147. Residues 275 to 350 are disordered; the sequence is LVVGNGPEGP…KHQEATETSL (76 aa). The span at 300 to 315 shows a compositional bias: basic and acidic residues; it reads CQERGLQEAVRREHQE. The 315-residue stretch at 484–798 folds into the Protein kinase domain; it reads LQRCEKIGEG…DLLCQHSLFK (315 aa). ATP is bound by residues 490–498, Lys511, 606–611, 649–654, and 687–689; these read IGEGVFGEV, EFGGID, DLHWGN, and DYT. Catalysis depends on Asp649, which acts as the Proton acceptor.

Belongs to the protein kinase superfamily. Ser/Thr protein kinase family. Haspin subfamily. Mg(2+) serves as cofactor. Post-translationally, autophosphorylated on both serine and threonine residues. Strongly phosphorylated during mitosis but this does not appear to significantly affect its intrinsic kinase activity. Phosphorylation by AURKB is required for full activity toward histone H3 at 'Ser-3' in mitosis. As to expression, strongly expressed in testis. Also present in thymus and bone marrow and low levels observed in prostate, intestine, lung, spleen and lymph node. Expressed in fetal skin, liver, kidney and small intestine and also in proliferating but not non-proliferating cell lines.

It is found in the nucleus. The protein localises to the chromosome. Its subcellular location is the cytoplasm. It localises to the cytoskeleton. The protein resides in the spindle. It carries out the reaction L-seryl-[protein] + ATP = O-phospho-L-seryl-[protein] + ADP + H(+). It catalyses the reaction L-threonyl-[protein] + ATP = O-phospho-L-threonyl-[protein] + ADP + H(+). Constitutive activity that does not require phosphorylation. Specifically inhibited by 3-(1H-indazol-5-yl)-N-propylimidazo[1,2-b]pyridazin-6-amine (CHR-6494). Serine/threonine-protein kinase that phosphorylates histone H3 at 'Thr-3' (H3T3ph) during mitosis. May act through H3T3ph to both position and modulate activation of AURKB and other components of the chromosomal passenger complex (CPC) at centromeres to ensure proper chromatid cohesion, metaphase alignment and normal progression through the cell cycle. This is Serine/threonine-protein kinase haspin from Homo sapiens (Human).